The chain runs to 357 residues: Aurora kinase A- and ninein-interacting protein (357 aa).

Residues 72–93 show a composition bias toward polar residues; the sequence is TSQQGKTNGADQRSVSSHTESQ. Residues 72–102 form a disordered region; it reads TSQQGKTNGADQRSVSSHTESQTNKESKEDA. Residues 189 to 357 are interaction with AURKA; that stretch reads QKEGEDSSCE…EGNQVIRHQA (169 aa). The interval 281–357 is interaction with RBBP8/CtIP; the sequence is KDSWSQLFTE…EGNQVIRHQA (77 aa). Ser-292 bears the Phosphoserine mark.

Belongs to the AUNIP family. As to quaternary structure, interacts (via C-terminus) with AURKA (via C-terminus). Interacts (via N-terminus) with NIN; this interaction blocks NIN phosphorylation by both AURKA and GSK3B. Identified in a complex with NIN and AURKA. Interacts with RBBP8/CtIP.

Its subcellular location is the nucleus. The protein localises to the chromosome. It is found in the cytoplasm. The protein resides in the cytoskeleton. It localises to the microtubule organizing center. Its subcellular location is the centrosome. The protein localises to the spindle pole. DNA-binding protein that accumulates at DNA double-strand breaks (DSBs) following DNA damage and promotes DNA resection and homologous recombination. Serves as a sensor of DNA damage: binds DNA with a strong preference for DNA substrates that mimic structures generated at stalled replication forks, and anchors RBBP8/CtIP to DSB sites to promote DNA end resection and ensuing homologous recombination repair. Inhibits non-homologous end joining (NHEJ). Required for the dynamic movement of AURKA at the centrosomes and spindle apparatus during the cell cycle. In Bos taurus (Bovine), this protein is Aurora kinase A- and ninein-interacting protein.